We begin with the raw amino-acid sequence, 76 residues long: DNA-directed RNA polymerase subunit epsilon (76 aa).

Belongs to the RNA polymerase subunit epsilon family. In terms of assembly, RNAP is composed of a core of 2 alpha, a beta and a beta' subunit. The core is associated with a delta subunit, and at least one of epsilon or omega. When a sigma factor is associated with the core the holoenzyme is formed, which can initiate transcription.

It catalyses the reaction RNA(n) + a ribonucleoside 5'-triphosphate = RNA(n+1) + diphosphate. A non-essential component of RNA polymerase (RNAP). In Streptococcus equi subsp. zooepidemicus (strain H70), this protein is DNA-directed RNA polymerase subunit epsilon.